A 323-amino-acid chain; its full sequence is Breast cancer metastasis-suppressor 1-like protein (323 aa).

Positions 1-17 are enriched in basic and acidic residues; it reads MPVHSRGDKKETNHHDE. Positions 1 to 56 are disordered; the sequence is MPVHSRGDKKETNHHDEMEVDYAENEGSSSEDEDTESSSVSEDGDSSEMDDEDCER. The span at 18–53 shows a compositional bias: acidic residues; that stretch reads MEVDYAENEGSSSEDEDTESSSVSEDGDSSEMDDED. 2 coiled-coil regions span residues 52-84 and 149-180; these read EDCE…KERL and EKLL…ITSE. At Ser-197 the chain carries Phosphoserine. Residues Lys-240 and Lys-246 each participate in a glycyl lysine isopeptide (Lys-Gly) (interchain with G-Cter in SUMO2) cross-link.

It belongs to the BRMS1 family. Component of the Sin3/HDAC1 corepressor complex at least composed of BRMS1, BRMS1L and ING2/ING1L. Interacts with HDAC and SIN3A.

The protein localises to the nucleus. Involved in the histone deacetylase (HDAC1)-dependent transcriptional repression activity. When overexpressed in lung cancer cell line that lacks p53/TP53 expression, inhibits cell growth. The sequence is that of Breast cancer metastasis-suppressor 1-like protein (BRMS1L) from Bos taurus (Bovine).